Consider the following 204-residue polypeptide: Large ribosomal subunit protein uL4 (204 aa).

The interval 44 to 76 (KRQGTQSAKTRSEVRGGGIKPWRQKGTGRARQG) is disordered.

Belongs to the universal ribosomal protein uL4 family. Part of the 50S ribosomal subunit.

Its function is as follows. One of the primary rRNA binding proteins, this protein initially binds near the 5'-end of the 23S rRNA. It is important during the early stages of 50S assembly. It makes multiple contacts with different domains of the 23S rRNA in the assembled 50S subunit and ribosome. In terms of biological role, forms part of the polypeptide exit tunnel. The polypeptide is Large ribosomal subunit protein uL4 (Clostridium perfringens (strain ATCC 13124 / DSM 756 / JCM 1290 / NCIMB 6125 / NCTC 8237 / Type A)).